The sequence spans 297 residues: Adrenocorticotropic hormone receptor (297 aa).

Over 1–23 the chain is Extracellular; the sequence is MKHIINSYENINNTARNNSDCPR. Residues asparagine 12 and asparagine 17 are each glycosylated (N-linked (GlcNAc...) asparagine). 2 disulfides stabilise this stretch: cysteine 21-cysteine 253 and cysteine 245-cysteine 251. The chain crosses the membrane as a helical span at residues 24–49; sequence VVLPEEIFFTISIVGVLENLIVLLAV. The Cytoplasmic segment spans residues 50–58; sequence FKNKNLQAP. A helical membrane pass occupies residues 59–79; the sequence is MYFFICSLAISDMLGSLYKIL. The Extracellular portion of the chain corresponds to 80 to 104; it reads ENILIILRNMGYLKPRGSFETTADD. The chain crosses the membrane as a helical span at residues 105-126; that stretch reads IIDSLFVLSLLGSIFSLSVIAA. Over 127–147 the chain is Cytoplasmic; it reads DRYITIFHALRYHSIVTMRRT. The helical transmembrane segment at 148 to 168 threads the bilayer; it reads VVVLTVIWTFCTGTGITMVIF. The Extracellular segment spans residues 169–180; the sequence is SHHVPTVITFTS. The chain crosses the membrane as a helical span at residues 181–199; sequence LFPLMLVFILCLYVHMFLL. The Cytoplasmic segment spans residues 200–217; that stretch reads ARSHTRKISTLPRANMKG. A helical membrane pass occupies residues 218 to 244; sequence AITLTILLGVFIFCWAPFVLHVLLMTF. Topologically, residues 245-256 are extracellular; it reads CPSNPYCACYMS. Residues 257–278 traverse the membrane as a helical segment; it reads LFQVNGMLIMCNAVIDPFIYAF. Topologically, residues 279 to 297 are cytoplasmic; that stretch reads RSPELRDAFKKMIFCSRYW. A lipid anchor (S-palmitoyl cysteine) is attached at cysteine 293.

The protein belongs to the G-protein coupled receptor 1 family. Homodimer. Interacts with corticotropin (ACTH). Interacts with MRAP; this interaction targets MC2R to the plasma membrane. Interacts with MRAP2; competing with MRAP for binding to MC2R and impairing the binding of corticotropin (ACTH). Post-translationally, ubiquitinated by MGRN1 that may be involved in post-endocytic trafficking and/or degradation of internalized receptor. As to expression, melanocytes and corticoadrenal tissue.

The protein resides in the cell membrane. Functionally, hormone receptor primarily expressed in adrenal cortex that plays a key role in regulating adrenocortical function. Upon corticotropin (ACTH) binding, facilitates the release of adrenal glucocorticoids, including cortisol and corticosterone. In addition, MC2R is required for fetal and neonatal adrenal gland development. Mechanistically, activates adenylate cyclase (cAMP), the MAPK cascade as well as the cAMP-dependent protein kinase A pathway leading to steroidogenic factor 1/NR5A1-mediated transcriptional activation. The protein is Adrenocorticotropic hormone receptor (MC2R) of Homo sapiens (Human).